Consider the following 215-residue polypeptide: Pyridoxine/pyridoxamine 5'-phosphate oxidase (215 aa).

Substrate-binding positions include 9–12 (RRDY) and K69. FMN contacts are provided by residues 64–69 (RVLLLK), 79–80 (FT), K86, and Q108. The substrate site is built by Y126, R130, and S134. Residues 143-144 (QS) and W188 each bind FMN. Position 194-196 (194-196 (RLH)) interacts with substrate. R198 contacts FMN.

Belongs to the pyridoxamine 5'-phosphate oxidase family. Homodimer. The cofactor is FMN.

The catalysed reaction is pyridoxamine 5'-phosphate + O2 + H2O = pyridoxal 5'-phosphate + H2O2 + NH4(+). The enzyme catalyses pyridoxine 5'-phosphate + O2 = pyridoxal 5'-phosphate + H2O2. It participates in cofactor metabolism; pyridoxal 5'-phosphate salvage; pyridoxal 5'-phosphate from pyridoxamine 5'-phosphate: step 1/1. Its pathway is cofactor metabolism; pyridoxal 5'-phosphate salvage; pyridoxal 5'-phosphate from pyridoxine 5'-phosphate: step 1/1. In terms of biological role, catalyzes the oxidation of either pyridoxine 5'-phosphate (PNP) or pyridoxamine 5'-phosphate (PMP) into pyridoxal 5'-phosphate (PLP). This is Pyridoxine/pyridoxamine 5'-phosphate oxidase from Pseudomonas putida (strain W619).